Reading from the N-terminus, the 271-residue chain is MKMELLIKAFIMGIVEGLTEFLPISSTGHLIIVGSFIKFTGKFATMFEIVIQLGAILAVVYYFKDKILSSLKALKPGEWGFNLWYKTFIAFLPAAIIGILTHHYIEEHLFSPFTVAIALIVGAIMMIVIEDIFGKKYKIDNMDKVSTSKAFWIGVAQVMSLFPGMSRSASTIMGGMLVGLSVRAAAEFSFFLAIPTMLAATGFELVKNITSMSLLEWEALAVGFIMSFITALIVVDKFLAYLKRHVLKPFAYYRLLVGVLMLFLIAQKIVK.

Transmembrane regions (helical) follow at residues Leu-5–Ser-25, Phe-43–Phe-63, Gly-80–Leu-100, Leu-109–Ile-129, Val-145–Met-165, Ala-186–Val-206, Leu-215–Val-235, and Val-246–Ala-266.

Belongs to the UppP family.

The protein resides in the cell membrane. It catalyses the reaction di-trans,octa-cis-undecaprenyl diphosphate + H2O = di-trans,octa-cis-undecaprenyl phosphate + phosphate + H(+). In terms of biological role, catalyzes the dephosphorylation of undecaprenyl diphosphate (UPP). Confers resistance to bacitracin. This chain is Undecaprenyl-diphosphatase, found in Caldanaerobacter subterraneus subsp. tengcongensis (strain DSM 15242 / JCM 11007 / NBRC 100824 / MB4) (Thermoanaerobacter tengcongensis).